Here is a 760-residue protein sequence, read N- to C-terminus: Phosphoribosylformylglycinamidine synthase subunit PurL (760 aa).

The segment at 1–25 (MNMSLPADRDTAKKPSAQKPSAHAQ) is disordered. His69 is an active-site residue. Tyr72 and Lys115 together coordinate ATP. Glu117 is a binding site for Mg(2+). Residues 118–121 (SHNH) and Arg140 contribute to the substrate site. Catalysis depends on His119, which acts as the Proton acceptor. Asp141 is a binding site for Mg(2+). A substrate-binding site is contributed by Gln265. Residue Asp293 participates in Mg(2+) binding. 337–339 (ESQ) provides a ligand contact to substrate. Asn519 and Gly556 together coordinate ATP. Asn557 contacts Mg(2+). Ser559 contributes to the substrate binding site.

The protein belongs to the FGAMS family. Monomer. Part of the FGAM synthase complex composed of 1 PurL, 1 PurQ and 2 PurS subunits.

The protein resides in the cytoplasm. It carries out the reaction N(2)-formyl-N(1)-(5-phospho-beta-D-ribosyl)glycinamide + L-glutamine + ATP + H2O = 2-formamido-N(1)-(5-O-phospho-beta-D-ribosyl)acetamidine + L-glutamate + ADP + phosphate + H(+). It functions in the pathway purine metabolism; IMP biosynthesis via de novo pathway; 5-amino-1-(5-phospho-D-ribosyl)imidazole from N(2)-formyl-N(1)-(5-phospho-D-ribosyl)glycinamide: step 1/2. In terms of biological role, part of the phosphoribosylformylglycinamidine synthase complex involved in the purines biosynthetic pathway. Catalyzes the ATP-dependent conversion of formylglycinamide ribonucleotide (FGAR) and glutamine to yield formylglycinamidine ribonucleotide (FGAM) and glutamate. The FGAM synthase complex is composed of three subunits. PurQ produces an ammonia molecule by converting glutamine to glutamate. PurL transfers the ammonia molecule to FGAR to form FGAM in an ATP-dependent manner. PurS interacts with PurQ and PurL and is thought to assist in the transfer of the ammonia molecule from PurQ to PurL. In Tropheryma whipplei (strain TW08/27) (Whipple's bacillus), this protein is Phosphoribosylformylglycinamidine synthase subunit PurL.